Reading from the N-terminus, the 129-residue chain is Cocaine- and amphetamine-regulated transcript protein (129 aa).

Residues 1-27 form the signal peptide; the sequence is MESSRLRLLPVLGAALLLLLPLLGAGA. The residue at position 41 (tyrosine 41) is a Phosphotyrosine. Serine 48 bears the Phosphoserine mark. 3 cysteine pairs are disulfide-bonded: cysteine 95/cysteine 113, cysteine 101/cysteine 121, and cysteine 115/cysteine 128.

The protein belongs to the CART family. In terms of tissue distribution, neuroendocrine tissues. Predominantly expressed in the hypothalamus, pituitary, and longitudinal muscle-myenteric plexus. Abundant expression is also seen in the midbrain/thalamus and eye. A lower level expression is seen in the other brain regions and adrenal.

Its subcellular location is the secreted. Functionally, satiety factor closely associated with the actions of leptin and neuropeptide y; this anorectic peptide inhibits both normal and starvation-induced feeding and completely blocks the feeding response induced by neuropeptide Y and regulated by leptin in the hypothalamus. The protein is Cocaine- and amphetamine-regulated transcript protein (Cartpt) of Rattus norvegicus (Rat).